We begin with the raw amino-acid sequence, 123 residues long: WAP four-disulfide core domain protein 5 (123 aa).

The N-terminal stretch at 1–24 is a signal peptide; sequence MRTQSLLLLGALLAVGSQLPAVFG. WAP domains follow at residues 27–74 and 75–121; these read KGEK…VPRV and SVKL…RDPA. 8 cysteine pairs are disulfide-bonded: C34–C62, C41–C66, C49–C61, C55–C70, C81–C109, C88–C113, C96–C108, and C102–C117.

The protein localises to the secreted. In terms of biological role, putative acid-stable proteinase inhibitor. The chain is WAP four-disulfide core domain protein 5 (WFDC5) from Gorilla gorilla gorilla (Western lowland gorilla).